The primary structure comprises 441 residues: Ribulose bisphosphate carboxylase large chain (441 aa).

Residues Asn-89 and Thr-139 each coordinate substrate. Residue Lys-141 is the Proton acceptor of the active site. Residue Lys-143 participates in substrate binding. Mg(2+) is bound by residues Lys-167, Asp-169, and Glu-170. Lys-167 carries the N6-carboxylysine modification. The Proton acceptor role is filled by His-260. Arg-261, His-293, and Ser-345 together coordinate substrate.

This sequence belongs to the RuBisCO large chain family. Type I subfamily. Heterohexadecamer of 8 large chains and 8 small chains; disulfide-linked. The disulfide link is formed within the large subunit homodimers. Mg(2+) serves as cofactor. Post-translationally, the disulfide bond which can form in the large chain dimeric partners within the hexadecamer appears to be associated with oxidative stress and protein turnover.

Its subcellular location is the plastid. It is found in the chloroplast. It catalyses the reaction 2 (2R)-3-phosphoglycerate + 2 H(+) = D-ribulose 1,5-bisphosphate + CO2 + H2O. The enzyme catalyses D-ribulose 1,5-bisphosphate + O2 = 2-phosphoglycolate + (2R)-3-phosphoglycerate + 2 H(+). In terms of biological role, ruBisCO catalyzes two reactions: the carboxylation of D-ribulose 1,5-bisphosphate, the primary event in carbon dioxide fixation, as well as the oxidative fragmentation of the pentose substrate in the photorespiration process. Both reactions occur simultaneously and in competition at the same active site. This chain is Ribulose bisphosphate carboxylase large chain, found in Polemonium reptans (Greek valerian).